We begin with the raw amino-acid sequence, 336 residues long: Phosphate acetyltransferase (336 aa).

This sequence belongs to the phosphate acetyltransferase and butyryltransferase family.

The protein resides in the cytoplasm. It carries out the reaction acetyl-CoA + phosphate = acetyl phosphate + CoA. Its pathway is metabolic intermediate biosynthesis; acetyl-CoA biosynthesis; acetyl-CoA from acetate: step 2/2. This Treponema pallidum (strain Nichols) protein is Phosphate acetyltransferase (pta).